The chain runs to 108 residues: Iron-sulfur cluster assembly protein CyaY (108 aa).

The protein belongs to the frataxin family.

In terms of biological role, involved in iron-sulfur (Fe-S) cluster assembly. May act as a regulator of Fe-S biogenesis. This Pseudomonas aeruginosa (strain ATCC 15692 / DSM 22644 / CIP 104116 / JCM 14847 / LMG 12228 / 1C / PRS 101 / PAO1) protein is Iron-sulfur cluster assembly protein CyaY.